Here is a 782-residue protein sequence, read N- to C-terminus: Protein bicaudal D (782 aa).

Positions 15–77 (VQDLQMEVER…RHELDITQEA (63 aa)) form a coiled coil. A Phosphoserine modification is found at S103. Residues 107–249 (ETSLNLQIFD…LETLQGEREA (143 aa)) are a coiled coil. Phosphoserine occurs at positions 285, 288, and 305. T306 carries the post-translational modification Phosphothreonine. At S310 the chain carries Phosphoserine. 2 coiled-coil regions span residues 320 to 368 (SEIH…FMSR) and 444 to 477 (TTTL…TLTH). S528 bears the Phosphoserine mark. Coiled coils occupy residues 603 to 630 (EKVN…KREQ) and 695 to 743 (CEEY…MEMD). The tract at residues 699-722 (VTQVDDLNRQLEAAEEEKKTLNQL) is interaction with Rab6. Residues 744 to 782 (REMRHVRRPMPAQRGTSGKSSFSTRPSSRNPASSNANPF) are disordered. Residues 757–767 (RGTSGKSSFST) are compositionally biased toward polar residues. Low complexity predominate over residues 768 to 782 (RPSSRNPASSNANPF).

Belongs to the BicD family. As to quaternary structure, may homodimerize but does not interact with BicDR. Interacts (via C-terminal domain) with Rab6. In ovaries, expressed in oocyte and nurse cells.

Its subcellular location is the cytoplasm. It localises to the cytoskeleton. Functionally, this protein is essential for differentiation. It may play a role in localizing of Nanos (a maternal determinant) activity in oocytes. Functions redundantly with BicDR. During oogenesis, plays a specific role, together with Rab6 but independently of Sec5, in the polarization of the oocyte microtubule cytoskeleton, in oskar mRNA localization and in the anterodorsal secretion of grk. Plays a role in the biogenesis of annulate lamellae containing nuclear pore complex components. During macrochaetae development, together with BicDR, involved in Rab 6 and Spn-F stability and distribution and actin cytoskeleton organization. The polypeptide is Protein bicaudal D (Drosophila melanogaster (Fruit fly)).